Reading from the N-terminus, the 198-residue chain is Probable molybdenum cofactor guanylyltransferase (198 aa).

GTP contacts are provided by residues 11-13 (LAG), lysine 23, aspartate 71, and aspartate 102. Position 102 (aspartate 102) interacts with Mg(2+).

It belongs to the MobA family. Mg(2+) serves as cofactor.

It is found in the cytoplasm. It catalyses the reaction Mo-molybdopterin + GTP + H(+) = Mo-molybdopterin guanine dinucleotide + diphosphate. Transfers a GMP moiety from GTP to Mo-molybdopterin (Mo-MPT) cofactor (Moco or molybdenum cofactor) to form Mo-molybdopterin guanine dinucleotide (Mo-MGD) cofactor. The protein is Probable molybdenum cofactor guanylyltransferase of Halalkalibacterium halodurans (strain ATCC BAA-125 / DSM 18197 / FERM 7344 / JCM 9153 / C-125) (Bacillus halodurans).